The primary structure comprises 259 residues: UPF0246 protein PputW619_0896 (259 aa).

The protein belongs to the UPF0246 family.

The sequence is that of UPF0246 protein PputW619_0896 from Pseudomonas putida (strain W619).